The following is a 61-amino-acid chain: Potassium channel toxin alpha-KTx 18.1 (61 aa).

Positions 1–24 are cleaved as a signal peptide; sequence MRFTGIILILISMTLIDSFFEMKV. Cystine bridges form between C33–C52, C38–C57, and C42–C59.

Expressed by the venom gland.

The protein resides in the secreted. Functionally, reversible blocker of both Kv1.3/KCNA3 potassium channels (high affinity) and Shaker B (mammalian Kv1.1 analog) potassium channels (very low affinity). This Tityus obscurus (Amazonian scorpion) protein is Potassium channel toxin alpha-KTx 18.1.